The sequence spans 642 residues: Threonine--tRNA ligase (642 aa).

The region spanning 1–61 (MPVITLPDGS…ENDAQLSIIT (61 aa)) is the TGS domain. Residues 243–534 (DHRKIGKQLD…LTEEFAGFFP (292 aa)) are catalytic. An N6-acetyllysine modification is found at Lys-286. Cys-334, His-385, and His-511 together coordinate Zn(2+).

This sequence belongs to the class-II aminoacyl-tRNA synthetase family. Homodimer. Requires Zn(2+) as cofactor.

It localises to the cytoplasm. The catalysed reaction is tRNA(Thr) + L-threonine + ATP = L-threonyl-tRNA(Thr) + AMP + diphosphate + H(+). Functionally, catalyzes the attachment of threonine to tRNA(Thr) in a two-step reaction: L-threonine is first activated by ATP to form Thr-AMP and then transferred to the acceptor end of tRNA(Thr). Also edits incorrectly charged L-seryl-tRNA(Thr). In Shigella boydii serotype 18 (strain CDC 3083-94 / BS512), this protein is Threonine--tRNA ligase.